We begin with the raw amino-acid sequence, 90 residues long: Antitoxin VapB35 (90 aa).

The segment at 53 to 90 is disordered; the sequence is GSVQPARVHGPAPRPTIPMRGGLDSGTLLERMRAEERY.

Belongs to the phD/YefM antitoxin family.

Its function is as follows. Antitoxin component of a type II toxin-antitoxin (TA) system. Neutralizes the effect of cognate toxin VapC35. This Mycobacterium tuberculosis (strain CDC 1551 / Oshkosh) protein is Antitoxin VapB35 (vapB35).